A 397-amino-acid polypeptide reads, in one-letter code: S-adenosylmethionine synthase (397 aa).

Residue His-17 participates in ATP binding. Residue Asp-19 coordinates Mg(2+). Glu-45 provides a ligand contact to K(+). 2 residues coordinate L-methionine: Glu-58 and Gln-101. The tract at residues 101–111 is flexible loop; sequence QSPDIAQGVDK. ATP is bound by residues 176–178, 243–244, Asp-252, 258–259, and Lys-279; these read DGK, RF, and RK. Asp-252 contributes to the L-methionine binding site. Residue Lys-283 participates in L-methionine binding.

It belongs to the AdoMet synthase family. In terms of assembly, homotetramer; dimer of dimers. Requires Mg(2+) as cofactor. K(+) is required as a cofactor.

It is found in the cytoplasm. It carries out the reaction L-methionine + ATP + H2O = S-adenosyl-L-methionine + phosphate + diphosphate. It functions in the pathway amino-acid biosynthesis; S-adenosyl-L-methionine biosynthesis; S-adenosyl-L-methionine from L-methionine: step 1/1. Its function is as follows. Catalyzes the formation of S-adenosylmethionine (AdoMet) from methionine and ATP. The overall synthetic reaction is composed of two sequential steps, AdoMet formation and the subsequent tripolyphosphate hydrolysis which occurs prior to release of AdoMet from the enzyme. The sequence is that of S-adenosylmethionine synthase from Staphylococcus aureus (strain MRSA252).